Here is a 90-residue protein sequence, read N- to C-terminus: UPF0297 protein OEOE_1166 (90 aa).

The protein belongs to the UPF0297 family.

The chain is UPF0297 protein OEOE_1166 from Oenococcus oeni (strain ATCC BAA-331 / PSU-1).